Consider the following 352-residue polypeptide: Quinolinate synthase (352 aa).

The iminosuccinate site is built by His-48 and Ser-69. Cys-114 contributes to the [4Fe-4S] cluster binding site. Iminosuccinate is bound by residues 140-142 (YAN) and Ser-157. Cys-201 is a binding site for [4Fe-4S] cluster. Iminosuccinate is bound by residues 227–229 (HPE) and Thr-244. Cys-298 serves as a coordination point for [4Fe-4S] cluster.

Belongs to the quinolinate synthase family. Type 1 subfamily. [4Fe-4S] cluster serves as cofactor.

It is found in the cytoplasm. It catalyses the reaction iminosuccinate + dihydroxyacetone phosphate = quinolinate + phosphate + 2 H2O + H(+). It functions in the pathway cofactor biosynthesis; NAD(+) biosynthesis; quinolinate from iminoaspartate: step 1/1. Functionally, catalyzes the condensation of iminoaspartate with dihydroxyacetone phosphate to form quinolinate. This Pseudomonas aeruginosa (strain UCBPP-PA14) protein is Quinolinate synthase.